We begin with the raw amino-acid sequence, 351 residues long: Large ribosomal subunit protein uL3 (351 aa).

2 disordered regions span residues 1-31 (MGHR…TPRT) and 246-271 (KGSR…GQLG).

This sequence belongs to the universal ribosomal protein uL3 family. As to quaternary structure, part of the 50S ribosomal subunit. Forms a cluster with proteins L14 and L24e.

Functionally, one of the primary rRNA binding proteins, it binds directly near the 3'-end of the 23S rRNA, where it nucleates assembly of the 50S subunit. This is Large ribosomal subunit protein uL3 from Saccharolobus islandicus (strain M.16.27) (Sulfolobus islandicus).